The following is a 321-amino-acid chain: MASSQGKNELKLADWMATLPESMHSIPLTNLAIPGSHDSFSFYIDEASPVGPEQPETVQNFVSVFGTVAKKLMRKWLATQTMNFTGQLGAGIRYFDLRISTKPRDPDNELYFAHGLFSAKVNEGLEEINAFLTDHHKEVVFLDFNHFYGMQKYHHEKLVQMLKDIYGNKMCPAIFAQEVSLKYLWEKDYQVLVFYHSPVALEVPFLWPGQMMPAPWANTTDPEKLIQFLQASITERRKKGSFFISQVVLTPKASTVVKGVASGLRETITERALPAMMQWVRTQKPGESGINIVTADFVELGDFISTVIKLNYVFDEGEANT.

In terms of domain architecture, PI-PLC X-box spans 22-197; the sequence is SMHSIPLTNL…DYQVLVFYHS (176 aa). Active-site residues include histidine 37 and histidine 114.

As to expression, expressed at highest levels in heart. Also detected in kidney, lung, small intestine and colon. Expressed at very low levels, if any, in leukocytes, thymus and skeletal muscle.

The protein localises to the cytoplasm. In Homo sapiens (Human), this protein is PI-PLC X domain-containing protein 3 (PLCXD3).